The chain runs to 239 residues: MPHLAYPTTTCEGFRCETHCAVRGLAICGELGPADHEEFERLAQHVRYGPKEALFSEDEVADSVYSLIEGIARLYKLLPDGRRQIIGFALPGDFLGMAPGNRYSFSADSIGGVTVCKFFRGPFLRFIENRPQMLLRMNDFATRELSLAQDQMLLLGRRSAEEKVAAFLVGWRDRLARLEGVTKTVSLPMGRQDIADFLGLTIETVSRTFTKLEREKLIVIVPDGVRVLDPKRFDALAAA.

Ile-27 to Gln-149 contributes to the a nucleoside 3',5'-cyclic phosphate binding site. Residues Arg-158–Lys-231 form the HTH crp-type domain. The segment at residues Arg-191 to Thr-210 is a DNA-binding region (H-T-H motif).

Functionally, transcriptional activator of anaerobic gene expression. For aromatic acid degradation. Also required for the anaerobic degradation of benzoate. The polypeptide is Transcriptional activatory protein AadR (aadR) (Rhodopseudomonas palustris (strain ATCC BAA-98 / CGA009)).